A 371-amino-acid chain; its full sequence is Uroporphyrinogen decarboxylase (371 aa).

The span at 1–14 (MARWATMSTETTGT) shows a compositional bias: polar residues. The disordered stretch occupies residues 1 to 30 (MARWATMSTETTGTGARDEGPRPGDPADSP). Residues 49–53 (RQAGR), Asp98, Tyr173, Ser228, and His342 each bind substrate.

It belongs to the uroporphyrinogen decarboxylase family. In terms of assembly, homodimer.

The protein resides in the cytoplasm. It catalyses the reaction uroporphyrinogen III + 4 H(+) = coproporphyrinogen III + 4 CO2. It functions in the pathway porphyrin-containing compound metabolism; protoporphyrin-IX biosynthesis; coproporphyrinogen-III from 5-aminolevulinate: step 4/4. Catalyzes the decarboxylation of four acetate groups of uroporphyrinogen-III to yield coproporphyrinogen-III. This chain is Uroporphyrinogen decarboxylase, found in Salinispora tropica (strain ATCC BAA-916 / DSM 44818 / JCM 13857 / NBRC 105044 / CNB-440).